Consider the following 180-residue polypeptide: Inorganic pyrophosphatase (180 aa).

The substrate site is built by Lys28, Arg42, and Tyr54. Mg(2+) contacts are provided by Asp66, Asp71, and Asp102. Residue Tyr139 participates in substrate binding.

It belongs to the PPase family. Homohexamer. The cofactor is Mg(2+).

Its subcellular location is the cytoplasm. It carries out the reaction diphosphate + H2O = 2 phosphate + H(+). Functionally, hydrolyzes PPi generated in anabolic reactions. Its function is as follows. Catalyzes the hydrolysis of inorganic pyrophosphate (PPi) forming two phosphate ions. The polypeptide is Inorganic pyrophosphatase (Pseudanabaena sp. (strain PCC 6903)).